Consider the following 1276-residue polypeptide: Sterol regulatory element-binding protein cleavage-activating protein (1276 aa).

Residues 1–18 (MTLTERLREKISQAFYNH) lie on the Cytoplasmic side of the membrane. The chain crosses the membrane as a helical span at residues 19–39 (GLLCASYPIPIILFTGLCILA). Topologically, residues 40-279 (CCYPLLKLPL…NLVHVHFKEE (240 aa)) are lumenal. Residues 46–284 (KLPLPGTGPV…HFKEEIGIAE (239 aa)) form a loop-1 region. The tract at residues 60–81 (PVKGYSPPPADSDHKQGEPSEQ) is disordered. N-linked (GlcNAc...) asparagine glycosylation occurs at asparagine 263. The helical transmembrane segment at 280–300 (IGIAELIPLVTTYIILFAYIY) threads the bilayer. Residues 284–442 (ELIPLVTTYI…MLFFTTVLSI (159 aa)) enclose the SSD domain. Residues 301-312 (FSTRKIDMVKSK) lie on the Cytoplasmic side of the membrane. A helical membrane pass occupies residues 313–333 (WGLALAAVVTVLSSLLMSVGL). At 334 to 344 (CTLFGLTPTLN) the chain is on the lumenal side. Residues 345-365 (GGEIFPYLVVVIGLENVLVLT) traverse the membrane as a helical segment. At 366-401 (KSVVSTPVDLEVKLRIAQGLSSESWSIMKNVATELG) the chain is on the cytoplasmic side. Residues 402 to 422 (IILIGYFTLVPAIQEFCLFAV) traverse the membrane as a helical segment. Position 423 (valine 423) is a topological domain, lumenal. The helical transmembrane segment at 424–444 (GLVSDFFLQMLFFTTVLSIDI) threads the bilayer. Topologically, residues 445–518 (RRMELADLNK…FLARTRLAQR (74 aa)) are cytoplasmic. Positions 447–452 (MELADL) match the ER export signal motif. Glycyl lysine isopeptide (Lys-Gly) (interchain with G-Cter in ubiquitin) cross-links involve residues lysine 454 and lysine 466. Residues 519–539 (LIMAGTVVWIGILVYTDPAGL) traverse the membrane as a helical segment. The loop-7 stretch occupies residues 535–710 (DPAGLRTYLA…QTHGDITLYK (176 aa)). Residues 540 to 707 (RTYLAAQVTE…GGTQTHGDIT (168 aa)) are Lumenal-facing. N-linked (GlcNAc...) asparagine glycans are attached at residues asparagine 590 and asparagine 641. Residues 708–728 (LYKVAALGLAAGIVLVLLLLC) traverse the membrane as a helical segment. At 729-1276 (LYRVLCPRNY…YVPSVLEKLD (548 aa)) the chain is on the cytoplasmic side. The segment at 731–1276 (RVLCPRNYGQ…YVPSVLEKLD (546 aa)) is interaction with SREBF2. The WD 1 repeat unit spans residues 771 to 811 (VLRGHLMDIECLASDGMLLVSCCLAGQVCVWDAQTGDCLTR). Residues serine 821, serine 837, serine 843, serine 850, serine 905, and serine 934 each carry the phosphoserine modification. The interval 834–903 (ERLSDGGKAS…RHRAGCGRSR (70 aa)) is disordered. The tract at residues 928-958 (SALRPPSPGPPLPQASQEEGTAPEKGSPPLA) is disordered. WD repeat units lie at residues 949–999 (APEK…LCCS) and 1002–1039 (EISS…SLSP). Arginine 1048 carries the post-translational modification Omega-N-methylarginine. WD repeat units lie at residues 1074–1111 (AHQK…CLFT), 1114–1152 (GHSG…RVSH), 1155–1192 (AHRG…KLYS), and 1194–1232 (QQDL…LLQT).

Belongs to the WD repeat SCAP family. As to quaternary structure, membrane region forms a homotetramer. Component of the SCAP-SREBP complex (composed of SCAP and SREBF1/SREBP1 or SREBF2/SREBP2); interacts with SREBF1/SREBP1 or SREBF2/SREBP2 through its C-terminal cytoplasmic domain. Forms a ternary complex with INSIG1 or INSIG2 through its transmembrane domains at high sterol concentrations. Interacts with PAQR3; the interaction anchors the SCAP-SREBP complex to the Golgi apparatus in low cholesterol conditions. Interacts with the SEC23-SEC24 complex in a SAR1-GTP-dependent manner through an ER export signal in its third cytoplasmic loop. Interacts with RNF139; the interaction inhibits the interaction of SCAP with SEC24B and hampering the ER to Golgi transport of the SCAP-SREBP complex. Interacts with SPRING1. Post-translationally, ubiquitinated at Lys-454 and Lys-466. RNF145 triggers ubiquitination of SCAP, likely inhibiting SCAP-SREBP complex transport to the Golgi apparatus and the subsequent processing/maturation of SREBF2/SREBP2.

It is found in the endoplasmic reticulum membrane. Its subcellular location is the golgi apparatus membrane. The protein localises to the cytoplasmic vesicle. It localises to the COPII-coated vesicle membrane. Its function is as follows. Escort protein required for cholesterol as well as lipid homeostasis. Regulates export of the SCAP-SREBP complex from the endoplasmic reticulum to the Golgi upon low cholesterol, thereby regulating the processing of sterol regulatory element-binding proteins (SREBPs) SREBF1/SREBP1 and SREBF2/SREBP2. At high sterol concentrations, formation of a ternary complex with INSIG (INSIG1 or INSIG2) leads to mask the ER export signal in SCAP, promoting retention of the complex in the endoplasmic reticulum. Low sterol concentrations trigger release of INSIG, a conformational change in the SSD domain of SCAP, unmasking of the ER export signal, promoting recruitment into COPII-coated vesicles and transport of the SCAP-SREBP to the Golgi: in the Golgi, SREBPs are then processed, releasing the transcription factor fragment of SREBPs from the membrane, its import into the nucleus and up-regulation of LDLR, INSIG1 and the mevalonate pathway. Binds cholesterol via its SSD domain. The protein is Sterol regulatory element-binding protein cleavage-activating protein of Rattus norvegicus (Rat).